A 143-amino-acid polypeptide reads, in one-letter code: Crossover junction endodeoxyribonuclease Hjc (143 aa).

Mg(2+) is bound at residue E12. Residue S32 is part of the active site. Residues D42 and E55 each coordinate Mg(2+).

It belongs to the Holliday junction resolvase Hjc family. As to quaternary structure, homodimer. Interacts with PCNA subunit PCNA1. Requires Mg(2+) as cofactor.

It carries out the reaction Endonucleolytic cleavage at a junction such as a reciprocal single-stranded crossover between two homologous DNA duplexes (Holliday junction).. With respect to regulation, autoinhibits at very high concentrations, possibly because of extreme junction distortion. Inhibition (and activity at low concentrations of enzyme) is stimulated by dsDNA and Sso7d. Activity stimulated by PCNA subunit PCNA1. In terms of biological role, a structure-specific endonuclease that resolves Holliday junction (HJ) intermediates during genetic recombination; may have some degree of sequence preference in a mobile junction. Cleaves 4-way DNA junctions introducing paired nicks in opposing strands, leaving a 5'-terminal phosphate and a 3'-terminal hydroxyl group that are subsequently ligated to produce recombinant products. Can cleave all 4 strands 3 bases 3' of the junction center. Cleaves both mobile and immobile junctions. Modifies the structure of the 4-way DNA junction, a model Holliday junction structure. The protein forms multiple complexes with 4-way DNA, suggesting more than 1 homodimer can bind to each junction. The polypeptide is Crossover junction endodeoxyribonuclease Hjc (Saccharolobus solfataricus (strain ATCC 35092 / DSM 1617 / JCM 11322 / P2) (Sulfolobus solfataricus)).